A 150-amino-acid chain; its full sequence is Deoxyuridine 5'-triphosphate nucleotidohydrolase (150 aa).

Substrate is bound by residues 70–72 (RSG), N83, and 87–89 (TID).

This sequence belongs to the dUTPase family. Mg(2+) is required as a cofactor.

It catalyses the reaction dUTP + H2O = dUMP + diphosphate + H(+). The protein operates within pyrimidine metabolism; dUMP biosynthesis; dUMP from dCTP (dUTP route): step 2/2. This enzyme is involved in nucleotide metabolism: it produces dUMP, the immediate precursor of thymidine nucleotides and it decreases the intracellular concentration of dUTP so that uracil cannot be incorporated into DNA. In Desulfotalea psychrophila (strain LSv54 / DSM 12343), this protein is Deoxyuridine 5'-triphosphate nucleotidohydrolase.